Consider the following 428-residue polypeptide: Glutamate-1-semialdehyde 2,1-aminomutase (428 aa).

N6-(pyridoxal phosphate)lysine is present on Lys-267.

It belongs to the class-III pyridoxal-phosphate-dependent aminotransferase family. HemL subfamily. Homodimer. It depends on pyridoxal 5'-phosphate as a cofactor.

It is found in the cytoplasm. It carries out the reaction (S)-4-amino-5-oxopentanoate = 5-aminolevulinate. It functions in the pathway porphyrin-containing compound metabolism; protoporphyrin-IX biosynthesis; 5-aminolevulinate from L-glutamyl-tRNA(Glu): step 2/2. It participates in porphyrin-containing compound metabolism; chlorophyll biosynthesis. This Prochlorococcus marinus (strain MIT 9313) protein is Glutamate-1-semialdehyde 2,1-aminomutase.